The following is a 236-amino-acid chain: MTRRYWHINLEEMMEAGVHFGHGTRKWNPRMAPYISAKRKGIHITNLTRTARFLSEACDLVFDAASIGKHFLIVGTKKKAADSVASAAIRARCHYVNKKWLGGMSTNWSTTETRLHKFRDLRAEQKAGKLNRLPKRDAAMLKRQLSHLQTYLGGIKYMTGLPDIVIIIDQQEEYTALRECLTLGIPTICLIDTNCDPDLADISIPANDDAIASIRLILNKLVSAICEGRSSYIRNC.

It belongs to the universal ribosomal protein uS2 family.

It is found in the plastid. Its subcellular location is the chloroplast. The sequence is that of Small ribosomal subunit protein uS2c (rps2) from Calycanthus floridus var. glaucus (Eastern sweetshrub).